We begin with the raw amino-acid sequence, 2220 residues long: Non-reducing polyketide synthase stbA (2220 aa).

Residues I10 to Q255 are N-terminal acylcarrier protein transacylase domain (SAT). One can recognise a Ketosynthase family 3 (KS3) domain in the interval S379–E803. Residues C551, H687, and H726 each act as for beta-ketoacyl synthase activity in the active site. Residues L906–A1207 are malonyl-CoA:ACP transacylase (MAT) domain. The active-site For acyl/malonyl transferase activity is the S993. An N-terminal hotdog fold region spans residues E1287–H1414. One can recognise a PKS/mFAS DH domain in the interval E1287–L1589. Positions Q1292 to L1588 are product template (PT) domain. H1323 (proton acceptor; for dehydratase activity) is an active-site residue. The segment at D1436–L1589 is C-terminal hotdog fold. D1500 acts as the Proton donor; for dehydratase activity in catalysis. 2 Carrier domains span residues A1634 to A1711 and P1742 to V1821. O-(pantetheine 4'-phosphoryl)serine occurs at positions 1671 and 1779. Positions T1879–N2210 are thioesterase (TE) domain. Active-site for thioesterase activity residues include S1999 and D2148.

The enzyme catalyses 3 malonyl-CoA + acetyl-CoA + 2 H(+) = orsellinate + 3 CO2 + 4 CoA. It functions in the pathway secondary metabolite biosynthesis; terpenoid biosynthesis. Functionally, non-reducing polyketide synthase; part of the cluster that mediates the biosynthesis of LL-Z1272-beta, also known as ilicicolin B, a prenylated aryl-aldehyde produced by several fungi and that serves as a key pathway intermediate for many fungal meroterpenoids. The first step in the pathway is performed by the non-reducing polyketide synthase stbA that produces orsellinic acid by condensing acetyl-CoA with 3 malonyl-CoA units. The prenyltransferase stbC then prenylates orsenilic acid into grifolic acid. Finally, grifolic acid is reduced to ilicicolin B by the NRPS-like protein stbB. This is Non-reducing polyketide synthase stbA from Stachybotrys bisbyi (Hyalostachybotrys bisbyi).